The chain runs to 463 residues: ATP-dependent protease ATPase subunit HslU (463 aa).

ATP is bound by residues I19, 61 to 66 (GVGKTE), D277, E341, and R413.

This sequence belongs to the ClpX chaperone family. HslU subfamily. As to quaternary structure, a double ring-shaped homohexamer of HslV is capped on each side by a ring-shaped HslU homohexamer. The assembly of the HslU/HslV complex is dependent on binding of ATP.

The protein localises to the cytoplasm. In terms of biological role, ATPase subunit of a proteasome-like degradation complex; this subunit has chaperone activity. The binding of ATP and its subsequent hydrolysis by HslU are essential for unfolding of protein substrates subsequently hydrolyzed by HslV. HslU recognizes the N-terminal part of its protein substrates and unfolds these before they are guided to HslV for hydrolysis. In Bacillus anthracis (strain A0248), this protein is ATP-dependent protease ATPase subunit HslU.